Reading from the N-terminus, the 498-residue chain is Tryptophan decarboxylase TDC2 (498 aa).

At Lys316 the chain carries N6-(pyridoxal phosphate)lysine.

This sequence belongs to the group II decarboxylase family. The cofactor is pyridoxal 5'-phosphate.

It catalyses the reaction L-tryptophan + H(+) = tryptamine + CO2. Functionally, involved in the biosynthesis of tryptamine. Supplies tryptamine for the indole moiety of camptothecin (CPT), an anti-cancer monoterpene alkaloid. Represents a key step in monoterpene indole alkaloid biosynthesis. Is specific for tryptophan, and inactive against tyrosine, phenylalanine and 3,4-dihydroxyphenylalanine (dopa). This Camptotheca acuminata (Happy tree) protein is Tryptophan decarboxylase TDC2.